The sequence spans 176 residues: ATP-dependent protease subunit HslV (176 aa).

Threonine 2 is an active-site residue. Glycine 157, cysteine 160, and threonine 163 together coordinate Na(+).

This sequence belongs to the peptidase T1B family. HslV subfamily. As to quaternary structure, a double ring-shaped homohexamer of HslV is capped on each side by a ring-shaped HslU homohexamer. The assembly of the HslU/HslV complex is dependent on binding of ATP.

It localises to the cytoplasm. The enzyme catalyses ATP-dependent cleavage of peptide bonds with broad specificity.. Allosterically activated by HslU binding. Protease subunit of a proteasome-like degradation complex believed to be a general protein degrading machinery. The chain is ATP-dependent protease subunit HslV from Klebsiella pneumoniae (strain 342).